We begin with the raw amino-acid sequence, 968 residues long: Pumilio homolog 1 (968 aa).

Disordered stretches follow at residues 1–25 (MIPE…DYEK) and 138–171 (NNVL…TGAS). S194 is subject to Phosphoserine. Disordered regions lie at residues 204 to 240 (GHGH…SQGI), 260 to 303 (GTPD…VTSG), and 360 to 382 (KSDQ…PHGS). 2 stretches are compositionally biased toward polar residues: residues 211–220 (QQPSRPASRN) and 227–238 (DSNNNLSPSASQ). A Phosphothreonine modification is found at T261. Over residues 291-303 (TSNQSPFNGVTSG) the composition is skewed to polar residues. The region spanning 610–950 (FGSSMLEEFK…HVVARIEKLV (341 aa)) is the PUM-HD domain. Pumilio repeat units lie at residues 630–665 (EIAG…MVYE), 666–701 (EIMP…ELAE), 702–737 (KLFD…KMVK), 738–773 (ELDG…FIIS), 774–810 (TFFG…KVME), 811–846 (EILS…VIIK), 847–882 (ELAG…LLVN), and 883–924 (EMLG…LILT).

Its subcellular location is the cytoplasm. Its function is as follows. Sequence-specific RNA-binding protein that regulates translation and mRNA stability by binding the 3'-UTR of target mRNAs. Binds the APUM-binding elements (APBEs) in the 3'-UTR mRNA sequence of CLV1, PNH, WUS and FAS2. The polypeptide is Pumilio homolog 1 (APUM1) (Arabidopsis thaliana (Mouse-ear cress)).